We begin with the raw amino-acid sequence, 328 residues long: Phenylalanine--tRNA ligase alpha subunit (328 aa).

Mg(2+) is bound at residue Glu253.

It belongs to the class-II aminoacyl-tRNA synthetase family. Phe-tRNA synthetase alpha subunit type 1 subfamily. In terms of assembly, tetramer of two alpha and two beta subunits. Requires Mg(2+) as cofactor.

The protein localises to the cytoplasm. It carries out the reaction tRNA(Phe) + L-phenylalanine + ATP = L-phenylalanyl-tRNA(Phe) + AMP + diphosphate + H(+). The chain is Phenylalanine--tRNA ligase alpha subunit from Chromobacterium violaceum (strain ATCC 12472 / DSM 30191 / JCM 1249 / CCUG 213 / NBRC 12614 / NCIMB 9131 / NCTC 9757 / MK).